Reading from the N-terminus, the 513-residue chain is Protein disulfide-isomerase 2 (513 aa).

Residues 1-20 (MNKFLALLFVLALFANIAFS) form the signal peptide. 2 Thioredoxin domains span residues 21-147 (CEGH…EELK) and 355-486 (DVIG…DNAA). Catalysis depends on nucleophile residues C70, C73, C406, and C409. 2 disulfide bridges follow: C70/C73 and C406/C409. The segment at 491-513 (LPSSQTDDNVESKKDSSAKHDEL) is disordered. The span at 500-513 (VESKKDSSAKHDEL) shows a compositional bias: basic and acidic residues. A Prevents secretion from ER motif is present at residues 510–513 (HDEL).

Belongs to the protein disulfide isomerase family.

Its subcellular location is the endoplasmic reticulum lumen. The catalysed reaction is Catalyzes the rearrangement of -S-S- bonds in proteins.. Its function is as follows. Participates in the folding of proteins containing disulfide bonds, may be involved in glycosylation, prolyl hydroxylation and triglyceride transfer. The protein is Protein disulfide-isomerase 2 (pdi2) of Dictyostelium discoideum (Social amoeba).